Consider the following 154-residue polypeptide: Cytochrome c-type biogenesis protein CcmE (154 aa).

At 1-8 the chain is on the cytoplasmic side; that stretch reads MTPQRKRR. A helical; Signal-anchor for type II membrane protein membrane pass occupies residues 9–29; that stretch reads LVMLAALAGGVGVAVALALAA. The Periplasmic portion of the chain corresponds to 30–154; sequence LQQNINLFYS…GGTPAAEPQP (125 aa). The heme site is built by histidine 124 and tyrosine 128. The disordered stretch occupies residues 130-154; the sequence is PPEAAHALKQGAATSGGTPAAEPQP.

The protein belongs to the CcmE/CycJ family.

Its subcellular location is the cell inner membrane. Its function is as follows. Heme chaperone required for the biogenesis of c-type cytochromes. Transiently binds heme delivered by CcmC and transfers the heme to apo-cytochromes in a process facilitated by CcmF and CcmH. In Bordetella petrii (strain ATCC BAA-461 / DSM 12804 / CCUG 43448), this protein is Cytochrome c-type biogenesis protein CcmE.